Reading from the N-terminus, the 66-residue chain is MNVTVEVVGEETSEVAVDDDGTYADLVRAVDLSPHEVTVLVDGRPVPEDQSVEVDRVKVLRLIKGG.

Residue Lys58 forms a Glycyl lysine isopeptide (Lys-Gly) (interchain with G-Cter in SAMP2) linkage. The residue at position 66 (Gly66) is a 1-thioglycine; alternate. Gly66 is modified (glycyl adenylate; alternate). Gly66 participates in a covalent cross-link: Glycyl lysine isopeptide (Gly-Lys) (interchain with K-? in acceptor proteins); alternate.

In terms of assembly, monomer. Monomeric and polymeric forms interact with NcsA. Post-translationally, the C-terminal glycine is likely acyl-adenylated (-COAMP) by UbaA, and also probably thiocarboxylated (-COSH) to function in sulfur transfer.

Functions as a protein modifier covalently attached to lysine residues of substrate proteins, as well as a sulfur carrier in tRNA thiolation. The protein modification process is termed sampylation and involves the formation of an isopeptide bond between the SAMP2 C-terminal glycine carboxylate and the epsilon-amino group of lysine residues on target proteins. Is able to form polymeric chains with itself at Lys-58, similar to ubiquitin and other ubiquitin-like proteins. May serve as a proteolytic signal in the cell to target proteins for degradation by proteasomes. This chain is Small archaeal modifier protein 2 (samp2), found in Haloferax volcanii (strain ATCC 29605 / DSM 3757 / JCM 8879 / NBRC 14742 / NCIMB 2012 / VKM B-1768 / DS2) (Halobacterium volcanii).